The chain runs to 396 residues: uncharacterized protein (396 aa).

The next 2 helical transmembrane spans lie at 27 to 47 (LLIACLFISGSLSIVVFQICL) and 69 to 89 (FIVLLCMILNMVAPSSLNVTF). Residues 117–122 (HQMYAD) carry the HXXXXD motif motif. 2 helical membrane passes run 123–143 (WIYLWWLSFVSNLGGNVYIIL) and 372–392 (LTPRILSYYGFFAFLILVFVM).

This sequence belongs to the 1-acyl-sn-glycerol-3-phosphate acyltransferase family.

It is found in the membrane. This is an uncharacterized protein from Saccharomyces cerevisiae (strain ATCC 204508 / S288c) (Baker's yeast).